Consider the following 479-residue polypeptide: Ammonium transporter 3 member 2 (479 aa).

The next 11 helical transmembrane spans lie at 34–54 (VAAT…YGGV), 59–79 (WAVN…ICWV), 139–159 (VVYF…GSLL), 164–184 (FLAW…VGAF), 202–222 (GGYV…YWVG), 237–257 (ILFT…FNGG), 272–292 (NTNI…VIFF), 297–317 (VVGA…AAGV), 321–341 (WAAL…MMIL), 355–375 (LGVF…TGLF), and 407–427 (IAGG…ICLA).

This sequence belongs to the ammonia transporter channel (TC 1.A.11.2) family.

The protein localises to the membrane. Its function is as follows. Involved in ammonium transport. This is Ammonium transporter 3 member 2 (AMT3-2) from Oryza sativa subsp. japonica (Rice).